The following is a 337-amino-acid chain: Glycerol-3-phosphate dehydrogenase [NAD(P)+] (337 aa).

NADPH is bound by residues S12, W13, and K110. Sn-glycerol 3-phosphate-binding residues include K110, G141, and S143. A145 lines the NADPH pocket. Positions 196, 249, 259, 260, and 261 each coordinate sn-glycerol 3-phosphate. K196 (proton acceptor) is an active-site residue. R260 contacts NADPH. The NADPH site is built by V284 and E286.

Belongs to the NAD-dependent glycerol-3-phosphate dehydrogenase family.

Its subcellular location is the cytoplasm. The enzyme catalyses sn-glycerol 3-phosphate + NAD(+) = dihydroxyacetone phosphate + NADH + H(+). It catalyses the reaction sn-glycerol 3-phosphate + NADP(+) = dihydroxyacetone phosphate + NADPH + H(+). It participates in membrane lipid metabolism; glycerophospholipid metabolism. Catalyzes the reduction of the glycolytic intermediate dihydroxyacetone phosphate (DHAP) to sn-glycerol 3-phosphate (G3P), the key precursor for phospholipid synthesis. The chain is Glycerol-3-phosphate dehydrogenase [NAD(P)+] from Levilactobacillus brevis (strain ATCC 367 / BCRC 12310 / CIP 105137 / JCM 1170 / LMG 11437 / NCIMB 947 / NCTC 947) (Lactobacillus brevis).